The chain runs to 448 residues: Probable glycine dehydrogenase (decarboxylating) subunit 1 (448 aa).

The protein belongs to the GcvP family. N-terminal subunit subfamily. As to quaternary structure, the glycine cleavage system is composed of four proteins: P, T, L and H. In this organism, the P 'protein' is a heterodimer of two subunits.

It catalyses the reaction N(6)-[(R)-lipoyl]-L-lysyl-[glycine-cleavage complex H protein] + glycine + H(+) = N(6)-[(R)-S(8)-aminomethyldihydrolipoyl]-L-lysyl-[glycine-cleavage complex H protein] + CO2. The glycine cleavage system catalyzes the degradation of glycine. The P protein binds the alpha-amino group of glycine through its pyridoxal phosphate cofactor; CO(2) is released and the remaining methylamine moiety is then transferred to the lipoamide cofactor of the H protein. The sequence is that of Probable glycine dehydrogenase (decarboxylating) subunit 1 from Staphylococcus aureus (strain COL).